A 147-amino-acid polypeptide reads, in one-letter code: Hemoglobin subunit beta (147 aa).

An N-acetylvaline modification is found at V2. The Globin domain occupies 3–147 (HLTGEEKSAV…VANALAHKYH (145 aa)). At T13 the chain carries Phosphothreonine. The residue at position 45 (S45) is a Phosphoserine. At K60 the chain carries N6-acetyllysine. Heme b is bound at residue H64. K83 carries the post-translational modification N6-acetyllysine. H93 contacts heme b. At C94 the chain carries S-nitrosocysteine. K145 bears the N6-acetyllysine mark.

This sequence belongs to the globin family. Heterotetramer of two alpha chains and two beta chains. In terms of tissue distribution, red blood cells.

Functionally, involved in oxygen transport from the lung to the various peripheral tissues. In Callimico goeldii (Goeldi's marmoset), this protein is Hemoglobin subunit beta (HBB).